We begin with the raw amino-acid sequence, 1696 residues long: E3 ubiquitin-protein ligase listerin (1696 aa).

17 HEAT repeats span residues arginine 17–lysine 55, phenylalanine 102–arginine 140, cysteine 144–serine 181, alanine 209–histidine 250, asparagine 252–threonine 289, leucine 354–serine 394, glutamate 431–aspartate 468, phenylalanine 542–glutamine 580, glutamate 596–valine 634, leucine 921–leucine 958, methionine 992–alanine 1029, aspartate 1108–leucine 1148, valine 1150–serine 1188, glycine 1245–tyrosine 1282, aspartate 1307–glycine 1344, valine 1371–leucine 1405, and glycine 1406–leucine 1442. The RING-type zinc finger occupies cysteine 1645–arginine 1692.

The protein belongs to the LTN1 family. Component of the ribosome quality control complex (RQC), composed of at least the E3 ubiquitin ligase LTN1 and NEMF associated with the 60S ribosomal subunit. The complex probably also contains TCF25 as well as VCP/p97 and its ubiquitin-binding cofactors.

The protein localises to the cytoplasm. The protein resides in the cytosol. It carries out the reaction S-ubiquitinyl-[E2 ubiquitin-conjugating enzyme]-L-cysteine + [acceptor protein]-L-lysine = [E2 ubiquitin-conjugating enzyme]-L-cysteine + N(6)-ubiquitinyl-[acceptor protein]-L-lysine.. It functions in the pathway protein modification; protein ubiquitination. E3 ubiquitin-protein ligase component of the ribosome quality control complex (RQC), a ribosome-associated complex that mediates ubiquitination and extraction of incompletely synthesized nascent chains for proteasomal degradation. Within the RQC complex, LTN1 is recruited to stalled 60S ribosomal subunits by NEMF and mediates ubiquitination of stalled nascent chains. Ubiquitination leads to VCP/p97 recruitment for extraction and degradation of the incomplete translation product. The protein is E3 ubiquitin-protein ligase listerin (ltn1) of Xenopus tropicalis (Western clawed frog).